The chain runs to 414 residues: Dihydroorotase (414 aa).

Residues H56 and H58 each contribute to the Zn(2+) site. Residues H58–R60 and N90 each bind substrate. K138, H171, H219, and D280 together coordinate Zn(2+). Residue K138 is modified to N6-carboxylysine. D280 is an active-site residue. Residue H284 participates in substrate binding.

This sequence belongs to the metallo-dependent hydrolases superfamily. DHOase family. Class I DHOase subfamily. Requires Zn(2+) as cofactor.

The enzyme catalyses (S)-dihydroorotate + H2O = N-carbamoyl-L-aspartate + H(+). It functions in the pathway pyrimidine metabolism; UMP biosynthesis via de novo pathway; (S)-dihydroorotate from bicarbonate: step 3/3. Catalyzes the reversible cyclization of carbamoyl aspartate to dihydroorotate. The sequence is that of Dihydroorotase from Thermoplasma acidophilum (strain ATCC 25905 / DSM 1728 / JCM 9062 / NBRC 15155 / AMRC-C165).